Reading from the N-terminus, the 188-residue chain is Large ribosomal subunit protein bL32m (188 aa).

Zn(2+) contacts are provided by cysteine 110, cysteine 113, cysteine 123, and cysteine 126. The interval 162–188 is disordered; that stretch reads GETPSEHDQGKRIIERERKRPSWFTQN. The span at 165 to 181 shows a compositional bias: basic and acidic residues; the sequence is PSEHDQGKRIIERERKR.

The protein belongs to the bacterial ribosomal protein bL32 family. As to quaternary structure, component of the mitochondrial ribosome large subunit (39S) which comprises a 16S rRNA and about 50 distinct proteins. Post-translationally, MRPL32 precursor is processed by the m-AAA protease (composed of AFG3L2 and SPG7), which cleaves the N-terminal transit peptide. Cleavage by the m-AAA protease takes place prior to assembly into the large subunit, an essential step for mitochondrial ribosome (mitoribosome) assembly. Proper processing by the m-AAA protease is dependent on the zinc-binding region within the tightly folded C-terminal domain of MRPL32: zinc-dependent folding halts degradation initiated from the N-terminus and triggers the release of mature MRPL32.

It localises to the mitochondrion. Its function is as follows. Component of the mitochondrial large ribosomal subunit (mt-LSU). The mitochondrial ribosome (mitoribosome) is a large ribonucleoprotein complex responsible for the synthesis of proteins inside mitochondria. This is Large ribosomal subunit protein bL32m (MRPL32) from Bos taurus (Bovine).